The chain runs to 319 residues: Acetyl esterase (319 aa).

Positions 91–93 match the Involved in the stabilization of the negatively charged intermediate by the formation of the oxyanion hole motif; it reads HGG. Catalysis depends on residues Ser165, Asp262, and His292.

The protein belongs to the 'GDXG' lipolytic enzyme family. In terms of assembly, homodimer. Interacts with MalT and MelA.

The protein resides in the cytoplasm. In terms of biological role, displays esterase activity towards short chain fatty esters (acyl chain length of up to 8 carbons). Able to hydrolyze triacetylglycerol (triacetin) and tributyrylglycerol (tributyrin), but not trioleylglycerol (triolein) or cholesterol oleate. Negatively regulates MalT activity by antagonizing maltotriose binding. Inhibits MelA galactosidase activity. This Escherichia coli (strain ATCC 8739 / DSM 1576 / NBRC 3972 / NCIMB 8545 / WDCM 00012 / Crooks) protein is Acetyl esterase.